The following is an 832-amino-acid chain: Translation initiation factor IF-2 (832 aa).

The disordered stretch occupies residues 1 to 244; the sequence is MSDTDGKKTL…KAMGGSQERE (244 aa). Residues 18–27 are compositionally biased toward polar residues; it reads TGQVKQSFSH. Basic and acidic residues predominate over residues 81–141; that stretch reads KANESEEAER…EARKKAEADA (61 aa). A compositionally biased stretch (low complexity) spans 142-171; it reads SSKPAAARSKADDPATMDPAAAQAAEARGA. 2 stretches are compositionally biased toward basic and acidic residues: residues 178-201 and 227-244; these read PRKE…DDRR and RKQE…QERE. The tr-type G domain occupies 329-497; that stretch reads PRPPVITVMG…SIALQAEILE (169 aa). Residues 338–345 form a G1 region; that stretch reads GHVDHGKT. Position 338–345 (338–345) interacts with GTP; the sequence is GHVDHGKT. The tract at residues 363–367 is G2; the sequence is GITQH. The G3 stretch occupies residues 385–388; sequence DTPG. Residues 385–389 and 439–442 each bind GTP; these read DTPGH and NKID. The interval 439–442 is G4; it reads NKID. Residues 475 to 477 are G5; sequence SAI.

The protein belongs to the TRAFAC class translation factor GTPase superfamily. Classic translation factor GTPase family. IF-2 subfamily.

The protein resides in the cytoplasm. One of the essential components for the initiation of protein synthesis. Protects formylmethionyl-tRNA from spontaneous hydrolysis and promotes its binding to the 30S ribosomal subunits. Also involved in the hydrolysis of GTP during the formation of the 70S ribosomal complex. This is Translation initiation factor IF-2 from Dinoroseobacter shibae (strain DSM 16493 / NCIMB 14021 / DFL 12).